The chain runs to 401 residues: Chalcone synthase 2 (401 aa).

C168 is an active-site residue.

This sequence belongs to the thiolase-like superfamily. Chalcone/stilbene synthases family.

The catalysed reaction is (E)-4-coumaroyl-CoA + 3 malonyl-CoA + 3 H(+) = 2',4,4',6'-tetrahydroxychalcone + 3 CO2 + 4 CoA. The protein operates within secondary metabolite biosynthesis; flavonoid biosynthesis. Functionally, the primary product of this enzyme is 4,2',4',6'-tetrahydroxychalcone (also termed naringenin-chalcone or chalcone) which can under specific conditions spontaneously isomerize into naringenin. In Sorghum bicolor (Sorghum), this protein is Chalcone synthase 2 (CHS2).